The following is a 386-amino-acid chain: Mannitol-1-phosphate 5-dehydrogenase (386 aa).

4–15 serves as a coordination point for NAD(+); the sequence is AIHFGGGNIGRG. K211 is an active-site residue.

It belongs to the mannitol dehydrogenase family. As to quaternary structure, monomer.

It carries out the reaction D-mannitol 1-phosphate + NAD(+) = beta-D-fructose 6-phosphate + NADH + H(+). Its function is as follows. Catalyzes the NAD(H)-dependent interconversion of D-fructose 6-phosphate and D-mannitol 1-phosphate in the mannitol metabolic pathway. In Emericella nidulans (strain FGSC A4 / ATCC 38163 / CBS 112.46 / NRRL 194 / M139) (Aspergillus nidulans), this protein is Mannitol-1-phosphate 5-dehydrogenase (mpdA).